The sequence spans 84 residues: Cytochrome b559 subunit alpha (84 aa).

Residues 24–38 (IIHAVTLPAIFIAGF) traverse the membrane as a helical segment. Heme is bound at residue His-26.

It belongs to the PsbE/PsbF family. In terms of assembly, heterodimer of an alpha subunit and a beta subunit. PSII is composed of 1 copy each of membrane proteins PsbA, PsbB, PsbC, PsbD, PsbE, PsbF, PsbH, PsbI, PsbJ, PsbK, PsbL, PsbM, PsbT, PsbX, PsbY, Psb30/Ycf12, peripheral proteins PsbO, CyanoQ (PsbQ), PsbU, PsbV and a large number of cofactors. It forms dimeric complexes. It depends on heme b as a cofactor.

Its subcellular location is the cellular thylakoid membrane. This b-type cytochrome is tightly associated with the reaction center of photosystem II (PSII). PSII is a light-driven water:plastoquinone oxidoreductase that uses light energy to abstract electrons from H(2)O, generating O(2) and a proton gradient subsequently used for ATP formation. It consists of a core antenna complex that captures photons, and an electron transfer chain that converts photonic excitation into a charge separation. This is Cytochrome b559 subunit alpha from Prochlorococcus marinus (strain MIT 9301).